The primary structure comprises 109 residues: Nucleoid-associated protein VIBHAR_03086 (109 aa).

Disordered stretches follow at residues M1 to M21 and Q88 to F109.

The protein belongs to the YbaB/EbfC family. In terms of assembly, homodimer.

The protein resides in the cytoplasm. The protein localises to the nucleoid. Functionally, binds to DNA and alters its conformation. May be involved in regulation of gene expression, nucleoid organization and DNA protection. This chain is Nucleoid-associated protein VIBHAR_03086, found in Vibrio campbellii (strain ATCC BAA-1116).